The sequence spans 790 residues: IQ motif and ubiquitin-like domain-containing protein (790 aa).

Polar residues predominate over residues 1 to 17 (MSNQPKKYETQNIANST). The tract at residues 1-49 (MSNQPKKYETQNIANSTEESDAFDIVTIPVPSEEPQESDQTEEHESGIE) is disordered. In terms of domain architecture, Ubiquitin-like spans 130-206 (ATVKVVLIPV…IQVEIFSTNP (77 aa)). The region spanning 337 to 366 (RLKAVIVIQTYYRQWHAKIFVEDLRRQKSL) is the IQ domain.

Component of the axonemal radial spoke 1 (RS1) complex, at least composed of spoke head proteins RSPH1, RSPH3, RSPH9 and the cilia-specific component RSPH4A or sperm-specific component RSPH6A, spoke stalk proteins RSPH14, DNAJB13, DYDC1, ROPN1L and NME5, and the anchor protein IQUB. Does not appear to be part of radial spoke complexes 2 or 3 (RS2 or RS3). Interacts with CALM1. Interacts with DNAJB13. Interacts with DYNLL2. Interacts with NME5. Interacts with RSPH3. Interacts with RSPH9. Interacts with ZMYND10. Interacts with calmodulin; the interaction occurs in conditions of low but not high calcium.

The protein resides in the cytoplasm. The protein localises to the cytoskeleton. It localises to the flagellum axoneme. Its subcellular location is the cell projection. It is found in the cilium. In terms of biological role, adapter protein that anchors the radial spoke 1 (RS1) complex to the A microtubule of outer doublet microtubules in axonemes. The triple radial spokes (RS1, RS2 and RS3) are required to modulate beating of the sperm flagellum. May play a role in inhibiting signaling via MAPK1/ERK2 and MAPK3/ERK1. Additionally, may play a role in the functioning of cilia. Not required for the functioning of tracheal or ependymal cilia. In Macaca fascicularis (Crab-eating macaque), this protein is IQ motif and ubiquitin-like domain-containing protein (IQUB).